The primary structure comprises 352 residues: CMP-sialic acid transporter 4 (352 aa).

The Cytoplasmic segment spans residues 1-51; it reads MEYRKIKDEDDHDVASDIESVKGKSHTVASSNIAMATLGVGSSERINWKRK. Residues 52-72 form a helical membrane-spanning segment; the sequence is GVVTCALTILTSSQAILIVWS. The Lumenal segment spans residues 73-81; that stretch reads KRAGKYEYS. A helical membrane pass occupies residues 82–102; sequence VTTANFLVGTLKCALSLLALT. At 103-124 the chain is on the cytoplasmic side; the sequence is RIWKNEGVTDDNRLSTTFDEVK. Residues 125 to 145 traverse the membrane as a helical segment; sequence VFPIPAALYLFKNLLQYYIFA. Residues 146-174 lie on the Lumenal side of the membrane; that stretch reads YVDAPGYQILKNLNIISTGVLYRIILKRK. A helical transmembrane segment spans residues 175–195; sequence LSEIQWAGFILLCCGCTTAQL. The Cytoplasmic portion of the chain corresponds to 196–210; sequence NSNSDRVLQTSLPGW. Residues 211 to 231 traverse the membrane as a helical segment; the sequence is TMAIVMALLSGFAGVYTEAII. Residues 232–238 lie on the Lumenal side of the membrane; that stretch reads KKRPSRN. A helical transmembrane segment spans residues 239–259; it reads INVQNFWLYVFGMAFNAVAIV. Topologically, residues 260–276 are cytoplasmic; sequence IQDFDAVANKGFFHGYS. The helical transmembrane segment at 277 to 297 threads the bilayer; it reads FITLLMILNHALSGIAVSMVM. The Lumenal segment spans residues 298-313; the sequence is KYADNIVKVYSTSVAM. A helical membrane pass occupies residues 314-334; it reads LLTAVVSVFLFNFHLSLAFFL. Residues 335–352 are Cytoplasmic-facing; the sequence is GSTVVSVSVYLHSAGKLR.

This sequence belongs to the nucleotide-sugar transporter family. CMP-Sialate:CMP antiporter (TC 2.A.7.12) subfamily.

The protein resides in the golgi apparatus membrane. Sugar transporter involved in the transport of CMP-sialic acid from the cytoplasm into the Golgi. Essential protein. This chain is CMP-sialic acid transporter 4, found in Arabidopsis thaliana (Mouse-ear cress).